The sequence spans 514 residues: Cytochrome P450 monooxygenase ptmQ (514 aa).

Residues 3–23 (YVAQSPWIATLIVTATTYCTL) form a helical membrane-spanning segment. N-linked (GlcNAc...) asparagine glycosylation is present at asparagine 148. Cysteine 452 serves as a coordination point for heme. A glycan (N-linked (GlcNAc...) asparagine) is linked at asparagine 486.

Belongs to the cytochrome P450 family. It depends on heme as a cofactor.

The protein localises to the membrane. It participates in secondary metabolite biosynthesis. In terms of biological role, cytochrome P450 monooxygenase; part of the gene cluster that mediates the biosynthesis of the indole diterpenes penitrems. The geranylgeranyl diphosphate (GGPP) synthase ptmG catalyzes the first step in penitrem biosynthesis via conversion of farnesyl pyrophosphate and isopentyl pyrophosphate into geranylgeranyl pyrophosphate (GGPP). Condensation of indole-3-glycerol phosphate with GGPP by the prenyl transferase ptmC then forms 3-geranylgeranylindole (3-GGI). Epoxidation by the FAD-dependent monooxygenase ptmM leads to a epoxidized-GGI that is substrate of the terpene cyclase ptmB for cyclization to yield paspaline. Paspaline is subsequently converted to 13-desoxypaxilline by the cytochrome P450 monooxygenase ptmP, the latter being then converted to paxilline by the cytochrome P450 monooxygenase ptmQ. Paxilline is converted to beta-paxitriol via C-10 ketoreduction by the short-chain dehydrogenase ptmH which can be monoprenylated at the C-20 by the indole diterpene prenyltransferase ptmD. A two-step elimination (acetylation and elimination) process performed by the O-acetyltransferase ptmV and ptmI leads to the production of the prenylated form of penijanthine. The FAD-linked oxidoreductase ptmO then converts the prenylated form of penijanthine into PC-M5 which is in turn transformed into PC-M4 by the aromatic dimethylallyltransferase ptmE. Five sequential oxidative transformations performed by the cytochrome P450 monooxygenases ptmK, ptmU, ptmL, ptmN and ptmJ yield the various penitrem compounds. PtmK, ptmU and ptmM are involved in the formation of the key bicyclic ring of penitrem C via the formation of the intermediates secopenitrem D and penitrem D. PtmL catalyzes the epoxidation of penitrem D and C to yield penitrem B and F, respectively. PtmJ catalyzes the last benzylic hydroxylation to convert penitrem B to prenitrem E and penitrem F to penitrem A. In Penicillium ochrochloron, this protein is Cytochrome P450 monooxygenase ptmQ.